We begin with the raw amino-acid sequence, 310 residues long: Glutarate 2-hydroxylase (310 aa).

Fe cation is bound by residues H160, D162, and H277.

It belongs to the glutarate hydroxylase family. Homotetramer. Fe(2+) serves as cofactor.

The enzyme catalyses glutarate + 2-oxoglutarate + O2 = (S)-2-hydroxyglutarate + succinate + CO2. It functions in the pathway amino-acid degradation. In terms of biological role, acts as an alpha-ketoglutarate-dependent dioxygenase catalyzing hydroxylation of glutarate (GA) to L-2-hydroxyglutarate (L2HG). Functions in a L-lysine degradation pathway that proceeds via cadaverine, glutarate and L-2-hydroxyglutarate. This Shigella flexneri protein is Glutarate 2-hydroxylase.